We begin with the raw amino-acid sequence, 344 residues long: tRNA N6-adenosine threonylcarbamoyltransferase (344 aa).

Residues histidine 112 and histidine 116 each contribute to the Fe cation site. Substrate contacts are provided by residues 134–138 (LASGG), aspartate 167, glycine 180, and asparagine 280. Aspartate 308 contacts Fe cation.

The protein belongs to the KAE1 / TsaD family. The cofactor is Fe(2+).

The protein resides in the cytoplasm. The enzyme catalyses L-threonylcarbamoyladenylate + adenosine(37) in tRNA = N(6)-L-threonylcarbamoyladenosine(37) in tRNA + AMP + H(+). In terms of biological role, required for the formation of a threonylcarbamoyl group on adenosine at position 37 (t(6)A37) in tRNAs that read codons beginning with adenine. Is involved in the transfer of the threonylcarbamoyl moiety of threonylcarbamoyl-AMP (TC-AMP) to the N6 group of A37, together with TsaE and TsaB. TsaD likely plays a direct catalytic role in this reaction. In Rickettsia massiliae (strain Mtu5), this protein is tRNA N6-adenosine threonylcarbamoyltransferase.